The following is a 160-amino-acid chain: uncharacterized protein (160 aa).

This is an uncharacterized protein from Escherichia coli O157:H7.